A 95-amino-acid chain; its full sequence is Sec-independent protein translocase protein TatA (95 aa).

Residues 1–21 (MGGISIWQLLIIALIVVLLFG) traverse the membrane as a helical segment. The segment covering 50 to 61 (KALEDNAADKPA) has biased composition (basic and acidic residues). Residues 50-95 (KALEDNAADKPAADAAKVTETAKVAETAPVAETAEKKAESKGKEQA) are disordered. Residues 62-81 (ADAAKVTETAKVAETAPVAE) are compositionally biased toward low complexity. Residues 82-95 (TAEKKAESKGKEQA) are compositionally biased toward basic and acidic residues.

It belongs to the TatA/E family. In terms of assembly, the Tat system comprises two distinct complexes: a TatABC complex, containing multiple copies of TatA, TatB and TatC subunits, and a separate TatA complex, containing only TatA subunits. Substrates initially bind to the TatABC complex, which probably triggers association of the separate TatA complex to form the active translocon.

Its subcellular location is the cell inner membrane. In terms of biological role, part of the twin-arginine translocation (Tat) system that transports large folded proteins containing a characteristic twin-arginine motif in their signal peptide across membranes. TatA could form the protein-conducting channel of the Tat system. The protein is Sec-independent protein translocase protein TatA of Shewanella halifaxensis (strain HAW-EB4).